A 174-amino-acid polypeptide reads, in one-letter code: Ribosome maturation factor RimM (174 aa).

The 74-residue stretch at 96-169 folds into the PRC barrel domain; sequence EPDTYYDHQL…ILEIDPPDGL (74 aa).

This sequence belongs to the RimM family. Binds ribosomal protein uS19.

The protein resides in the cytoplasm. In terms of biological role, an accessory protein needed during the final step in the assembly of 30S ribosomal subunit, possibly for assembly of the head region. Essential for efficient processing of 16S rRNA. May be needed both before and after RbfA during the maturation of 16S rRNA. It has affinity for free ribosomal 30S subunits but not for 70S ribosomes. The sequence is that of Ribosome maturation factor RimM from Mycobacterium marinum (strain ATCC BAA-535 / M).